The following is a 983-amino-acid chain: Polyhomeotic-like protein 3 (983 aa).

7 disordered regions span residues 1-34, 103-149, 225-283, 313-332, 339-410, 477-509, and 601-620; these read MDTE…MQQP, LSSG…SSTS, VLSS…TAVT, LHSP…QQQQ, LQNS…SQSP, PGQQ…STSP, and DECV…PAAI. Low complexity-rich tracts occupy residues 9-29 and 103-126; these read TSSV…TSSS and LSSG…SQTS. The segment covering 127 to 139 has biased composition (polar residues); the sequence is INLSTSPTPAQLI. The segment covering 140-149 has biased composition (low complexity); sequence SRSQASSSTS. Residues 225–257 show a composition bias toward polar residues; sequence VLSSSQNGPPKSTSQTQSLTICHNKTTVTSSKI. A compositionally biased stretch (basic and acidic residues) spans 258-271; the sequence is SQRDPSPESNKKGE. S263 and S272 each carry phosphoserine. The span at 274–283 shows a compositional bias: polar residues; that stretch reads SLESRSTAVT. A Phosphoserine modification is found at S315. Positions 365–383 are enriched in polar residues; the sequence is SNAQSQHCSPIQSHPSPLT. A compositionally biased stretch (low complexity) spans 384–398; it reads VSPNQSQSAQQSVVV. Residues 477-489 show a composition bias toward polar residues; that stretch reads PGQQIVSPSHQQY. The segment covering 490-506 has biased composition (low complexity); it reads SSLQSSPIPIASPPQMS. Phosphothreonine occurs at positions 609 and 614. S616 bears the Phosphoserine mark. Glycyl lysine isopeptide (Lys-Gly) (interchain with G-Cter in SUMO2) cross-links involve residues K691 and K732. Residues 691–720 carry the HD1 motif; that stretch reads KPPQAIVKPQILTHVIEGFVIQEGLEPFPV. A phosphoserine mark is found at S761 and S762. The segment at 776–810 adopts an FCS-type zinc-finger fold; sequence EEMDSELLKCEFCGKMGYANEFLRSKRFCTMSCAK. The Zn(2+) site is built by C785, C788, C804, and C808. Residue K810 forms a Glycyl lysine isopeptide (Lys-Gly) (interchain with G-Cter in SUMO2) linkage. Disordered stretches follow at residues 827 to 847 and 864 to 889; these read RKPD…PDGA and EEDL…SERE. Residues 919 to 983 form the SAM domain; sequence WTVDDVWAFI…CARINSLKES (65 aa).

Component of a PRC1-like complex.

The protein localises to the nucleus. Functionally, component of a Polycomb group (PcG) multiprotein PRC1-like complex, a complex class required to maintain the transcriptionally repressive state of many genes, including Hox genes, throughout development. PcG PRC1 complex acts via chromatin remodeling and modification of histones; it mediates monoubiquitination of histone H2A 'Lys-119', rendering chromatin heritably changed in its expressibility. The chain is Polyhomeotic-like protein 3 (PHC3) from Homo sapiens (Human).